We begin with the raw amino-acid sequence, 303 residues long: Digeranylgeranylglyceryl phosphate synthase (303 aa).

7 consecutive transmembrane segments (helical) span residues 23–43 (VLGV…AAIA), 88–108 (LALA…PLTG), 130–150 (LPGN…GSLA), 164–184 (TIPI…VKGV), 206–228 (FALR…AAPL), 232–254 (GYAF…AACL), and 272–292 (VAMF…PVFY).

Belongs to the UbiA prenyltransferase family. DGGGP synthase subfamily. The cofactor is Mg(2+).

The protein resides in the cell membrane. It carries out the reaction sn-3-O-(geranylgeranyl)glycerol 1-phosphate + (2E,6E,10E)-geranylgeranyl diphosphate = 2,3-bis-O-(geranylgeranyl)-sn-glycerol 1-phosphate + diphosphate. It functions in the pathway membrane lipid metabolism; glycerophospholipid metabolism. In terms of biological role, prenyltransferase that catalyzes the transfer of the geranylgeranyl moiety of geranylgeranyl diphosphate (GGPP) to the C2 hydroxyl of (S)-3-O-geranylgeranylglyceryl phosphate (GGGP). This reaction is the second ether-bond-formation step in the biosynthesis of archaeal membrane lipids. This chain is Digeranylgeranylglyceryl phosphate synthase, found in Ignicoccus hospitalis (strain KIN4/I / DSM 18386 / JCM 14125).